Here is a 106-residue protein sequence, read N- to C-terminus: Putative membrane protein insertion efficiency factor (106 aa).

It belongs to the UPF0161 family.

It is found in the cell inner membrane. Could be involved in insertion of integral membrane proteins into the membrane. The chain is Putative membrane protein insertion efficiency factor from Acinetobacter baumannii (strain AB307-0294).